Reading from the N-terminus, the 406-residue chain is GTPase Obg (406 aa).

The Obg domain maps to 1 to 159 (MKFVDEVSIF…RDLKLELKVL (159 aa)). Residues 126–149 (GNTRFKSSTNRAPRQTTPGKPGES) form a disordered region. Over residues 129-143 (RFKSSTNRAPRQTTP) the composition is skewed to polar residues. Positions 160–333 (ADVGLLGLPN…ICRDIMHYLE (174 aa)) constitute an OBG-type G domain. GTP contacts are provided by residues 166 to 173 (GLPNAGKS), 191 to 195 (FTTLV), 213 to 216 (DIPG), 283 to 286 (NKMD), and 314 to 316 (SAI). Mg(2+) contacts are provided by serine 173 and threonine 193. Residues 376–406 (SGVRSVDDIDEDDDFFDDEDDDGPEIIYVRD) form a disordered region. The segment covering 383-399 (DIDEDDDFFDDEDDDGP) has biased composition (acidic residues).

This sequence belongs to the TRAFAC class OBG-HflX-like GTPase superfamily. OBG GTPase family. As to quaternary structure, monomer. Requires Mg(2+) as cofactor.

It localises to the cytoplasm. Functionally, an essential GTPase which binds GTP, GDP and possibly (p)ppGpp with moderate affinity, with high nucleotide exchange rates and a fairly low GTP hydrolysis rate. Plays a role in control of the cell cycle, stress response, ribosome biogenesis and in those bacteria that undergo differentiation, in morphogenesis control. The polypeptide is GTPase Obg (Ectopseudomonas mendocina (strain ymp) (Pseudomonas mendocina)).